A 341-amino-acid chain; its full sequence is Undecaprenyl-phosphate 4-deoxy-4-formamido-L-arabinose transferase (341 aa).

2 consecutive transmembrane segments (helical) span residues 235-255 (LSIVGFSLAALGMLFAFALIV) and 269-289 (LFVLFAVLFVFTGGQFIGMGL).

This sequence belongs to the glycosyltransferase 2 family.

Its subcellular location is the cell inner membrane. The catalysed reaction is UDP-4-deoxy-4-formamido-beta-L-arabinose + di-trans,octa-cis-undecaprenyl phosphate = 4-deoxy-4-formamido-alpha-L-arabinopyranosyl di-trans,octa-cis-undecaprenyl phosphate + UDP. Its pathway is glycolipid biosynthesis; 4-amino-4-deoxy-alpha-L-arabinose undecaprenyl phosphate biosynthesis; 4-amino-4-deoxy-alpha-L-arabinose undecaprenyl phosphate from UDP-4-deoxy-4-formamido-beta-L-arabinose and undecaprenyl phosphate: step 1/2. It participates in bacterial outer membrane biogenesis; lipopolysaccharide biosynthesis. Catalyzes the transfer of 4-deoxy-4-formamido-L-arabinose from UDP to undecaprenyl phosphate. The modified arabinose is attached to lipid A and is required for resistance to polymyxin and cationic antimicrobial peptides. This Pseudomonas fluorescens (strain SBW25) protein is Undecaprenyl-phosphate 4-deoxy-4-formamido-L-arabinose transferase.